Consider the following 147-residue polypeptide: Globin, polymeric component P3 (147 aa).

One can recognise a Globin domain in the interval 2–146 (HLTADQVAAL…ISDALIAGLE (145 aa)). Heme b is bound at residue His96.

The protein belongs to the globin family. Polymer.

This is Globin, polymeric component P3 from Glycera dibranchiata (Bloodworm).